The sequence spans 1153 residues: Error-prone DNA polymerase (1153 aa).

Disordered regions lie at residues 1–39 and 64–89; these read MFYS…QAQP and VGEG…GASQ.

This sequence belongs to the DNA polymerase type-C family. DnaE2 subfamily.

Its subcellular location is the cytoplasm. The catalysed reaction is DNA(n) + a 2'-deoxyribonucleoside 5'-triphosphate = DNA(n+1) + diphosphate. Its function is as follows. DNA polymerase involved in damage-induced mutagenesis and translesion synthesis (TLS). It is not the major replicative DNA polymerase. In Corynebacterium jeikeium (strain K411), this protein is Error-prone DNA polymerase.